The following is a 232-amino-acid chain: Vesicle transport through interaction with t-SNAREs homolog 1B (232 aa).

N-acetylalanine is present on Ala-2. 2 interaction with CLINT1 regions span residues 2–23 (ASSAASSEHFEKLHEIFRGLHE) and 69–73 (APLSF). At 2–208 (ASSAASSEHF…SRKVTTNKLL (207 aa)) the chain is on the cytoplasmic side. Residues 35–98 (TAGTEEKKKL…AKLHREVRST (64 aa)) are a coiled coil. Thr-103 carries the post-translational modification Phosphothreonine. Residue Arg-107 is modified to Omega-N-methylarginine. Position 138 is a phosphoserine (Ser-138). Residues 161-198 (SEIIEELGEQRDQLERTKSRLVNTSENLSKSRKILRSM) adopt a coiled-coil conformation. A helical; Anchor for type IV membrane protein transmembrane segment spans residues 209–229 (LSIIILLELAILGGLVYYKFF). Topologically, residues 230–232 (RSH) are vesicular.

This sequence belongs to the VTI1 family. In terms of assembly, forms a SNARE complex with STX7, STX8 and VAMP8 which functions in the homotypic fusion of late endosomes. Component of the SNARE complex composed of STX7, STX8, VAMP7 and VIT1B that is required for heterotypic fusion of late endosomes with lysosomes. May interact with STX17. Interacts with CLINT1. Expressed in all tissues examined.

The protein localises to the early endosome membrane. It localises to the late endosome membrane. The protein resides in the lysosome membrane. It is found in the cytoplasmic granule. Its subcellular location is the recycling endosome membrane. V-SNARE that mediates vesicle transport pathways through interactions with t-SNAREs on the target membrane. These interactions are proposed to mediate aspects of the specificity of vesicle trafficking and to promote fusion of the lipid bilayers. May be concerned with increased secretion of cytokines associated with cellular senescence. This is Vesicle transport through interaction with t-SNAREs homolog 1B (VTI1B) from Homo sapiens (Human).